The sequence spans 173 residues: MSLQQLTHDEIDHLSMIELGVKILKEENKAMNYKVIFNKIAELKDFTDEQKQNMMAQFYTDMNVDGRFLTLGSGMWGLKRWYPVEQAEEEITEEPKKKTKKKKKKAEVIDDVDDDLDVTDDEIDDIVSDLGDDLDDDDFEDDLDEDLEDLEDEVDELEADEDVEDENDDDNTR.

The HTH HARE-type domain occupies 14 to 81; the sequence is LSMIELGVKI…GSGMWGLKRW (68 aa). Residues 86–173 form a disordered region; the sequence is QAEEEITEEP…EDENDDDNTR (88 aa). Residues 109-173 are compositionally biased toward acidic residues; it reads IDDVDDDLDV…EDENDDDNTR (65 aa).

Belongs to the RpoE family. As to quaternary structure, RNAP is composed of a core of 2 alpha, a beta and a beta' subunits. The core is associated with a delta subunit and one of several sigma factors.

In terms of biological role, participates in both the initiation and recycling phases of transcription. In the presence of the delta subunit, RNAP displays an increased specificity of transcription, a decreased affinity for nucleic acids, and an increased efficiency of RNA synthesis because of enhanced recycling. The polypeptide is Probable DNA-directed RNA polymerase subunit delta (Oceanobacillus iheyensis (strain DSM 14371 / CIP 107618 / JCM 11309 / KCTC 3954 / HTE831)).